A 408-amino-acid chain; its full sequence is Snake venom 5'-nucleotidase (408 aa).

H54 and H77 together coordinate Zn(2+). N-linked (GlcNAc...) asparagine glycans are attached at residues N167 and N181. Intrachain disulfides connect C187–C192 and C199–C221. R188 is an AMP binding site. The AMP site is built by N224, R229, and F252. A disulfide bridge connects residues C311 and C314. Positions 335 and 341 each coordinate AMP. 2 consecutive propeptides (removed in mature form) follow at residues 385 to 388 (DGTL) and 385 to 408 (DGTL…FFIL).

Belongs to the 5'-nucleotidase family. Homodimer. Venom 5'-nucleotidases (or a part thereof) may be released into the venom via exosome-like vesicles. They may be attached via a GPI anchor to the membrane of these vesicles. Soluble forms of 5'-nucleotidase might be released by cleavage of the ectodomain in the exosome-like vesicles or venom gland cells. Expressed by the venom gland.

Its subcellular location is the membrane. The catalysed reaction is a ribonucleoside 5'-phosphate + H2O = a ribonucleoside + phosphate. It catalyses the reaction AMP + H2O = adenosine + phosphate. It carries out the reaction GMP + H2O = guanosine + phosphate. The enzyme catalyses ADP + H2O = AMP + phosphate + H(+). Is potently inhibited by metal ions Fe(3+), Cu(2+) and Zn(2+). Is enhanced by Mn(2+). Ca(2+) and Mg(2+) have no effect. Its function is as follows. Hydrolyzes nucleotides into nucleosides. Prefers AMP as the substrate but also cleaves GMP and ADP. Does not affect AMP, cAMP and cGMP. Inhibits ADP- and collagen-induced platelet aggregation. Snake venom 5'-nucleotidases are widely distributed among venomous snake taxa, but there is a lack of information about their biological activities. They have been shown to inhibit platelet aggregation. This effect may be due to the liberation of inhibitory AMP or adenosine by its action on ADP released upon initiation of aggregation. Venom 5'-nucleotidases are also known to synergistically act in vivo with other toxins like ADPases, phospholipases, and disintegrins to exert a more pronounced anti-coagulant effect. This is Snake venom 5'-nucleotidase from Macrovipera lebetinus (Levantine viper).